We begin with the raw amino-acid sequence, 473 residues long: MAPALPWLLLWVGSGVLPVHGTQDGIRLPLRSGLAGAPLGLRLPRETDEEPGRRGSFVEMVDNLRGKSGQGYYVEMTVGSPPQTLNILVDTGSSNFAVGAAPHPFLHRYYQRQRSSTYRDLRKGVYVPYTQGKWEGELGTDLVSIPHGPNVTVRANIAAITESDKFFINGSNWEGILGLAYAEIARLCGAGFPLNQSEAVASVGGSMIIGGIDHSLYTGNLWYTPIRREWYYEVIIVRVEINGQDLKMDCKEYNYDKSIVDSGTTNLRLPKKVFEAAVKSIKAASSTEKFPDGFWLGEQLVCWQAGTTPWNIFPVISLYLMGEVTNQSFRITILPQQYLRPVEDVATSQDDCYKFAISQSSTGTVMGAVIMEGFYVVFDRARKRIGFAVSACHVHDEFRTATVEGPFVTPDMEDCGYNIPQTDESTLMTIAYVMAAICALFMLPLCLMVCQWRCLRCLRHQHDDFADDISLLK.

The N-terminal stretch at 1–21 (MAPALPWLLLWVGSGVLPVHG) is a signal peptide. Residues 22-45 (TQDGIRLPLRSGLAGAPLGLRLPR) constitute a propeptide that is removed on maturation. At 22–429 (TQDGIRLPLR…PQTDESTLMT (408 aa)) the chain is on the extracellular side. A Peptidase A1 domain is found at 72-388 (YYVEMTVGSP…DRARKRIGFA (317 aa)). Asp-90 is a catalytic residue. Lys-123 is modified (N6-acetyllysine). N-linked (GlcNAc...) asparagine glycosylation is found at Asn-150, Asn-169, and Asn-195. Intrachain disulfides connect Cys-188/Cys-392, Cys-250/Cys-415, and Cys-302/Cys-352. An N6-acetyllysine mark is found at Lys-247, Lys-251, and Lys-257. Residue Asp-261 is part of the active site. Residues Lys-271, Lys-272, and Lys-279 each carry the N6-acetyllysine modification. A glycan (N-linked (GlcNAc...) asparagine) is linked at Asn-326. A helical transmembrane segment spans residues 430 to 450 (IAYVMAAICALFMLPLCLMVC). 4 S-palmitoyl cysteine lipidation sites follow: Cys-446, Cys-450, Cys-454, and Cys-457. Residues 451–473 (QWRCLRCLRHQHDDFADDISLLK) lie on the Cytoplasmic side of the membrane. Residues 451–473 (QWRCLRCLRHQHDDFADDISLLK) are interaction with RTN3. The short motif at 468 to 472 (DISLL) is the DXXLL element. Ser-470 carries the phosphoserine modification. Lys-473 is covalently cross-linked (Glycyl lysine isopeptide (Lys-Gly) (interchain with G-Cter in ubiquitin)).

This sequence belongs to the peptidase A1 family. As to quaternary structure, monomer. Interacts (via DXXLL motif) with GGA1, GGA2 and GGA3 (via their VHS domain); the interaction highly increases when BACE1 is phosphorylated at Ser-470. Interacts with RTN1; RTN2; RTN3 and RTN4; the interaction leads to inhibition of amyloid precursor protein processing. Interacts with SNX6. Interacts with PCSK9. Interacts with NAT8 and NAT8B. Interacts with BIN1. Interacts (via extracellular domain) with ADAM10 (via extracellular domain). Interacts with SORL1; this interaction may affect binding with APP and hence reduce APP cleavage. Interacts with NRDC AND NRG1. In terms of processing, palmitoylation mediates lipid raft localization. Acetylated in the endoplasmic reticulum at Lys-123, Lys-247, Lys-251, Lys-257, Lys-271, Lys-272, and Lys-279. Acetylation by NAT8 and NAT8B is transient and deacetylation probably occurs in the Golgi. Acetylation regulates the maturation, the transport to the plasma membrane, the stability and the expression of the protein. Post-translationally, ubiquitinated at Lys-473, ubiquitination leads to lysosomal degradation. Monoubiquitinated and 'Lys-63'-linked polyubitinated. Deubiquitnated by USP8; inhibits lysosomal degradation. In terms of processing, phosphorylation at Ser-470 is required for interaction with GGA1 and retrograded transport from endosomal compartments to the trans-Golgi network. Non-phosphorylated BACE1 enters a direct recycling route to the cell surface. N-Glycosylated. Addition of a bisecting N-acetylglucosamine by MGAT3 blocks lysosomal targeting, further degradation and is required for maintaining stability under stress conditions.

The protein resides in the cell membrane. Its subcellular location is the golgi apparatus. It localises to the trans-Golgi network. The protein localises to the endoplasmic reticulum. It is found in the endosome. The protein resides in the cell surface. Its subcellular location is the cytoplasmic vesicle membrane. It localises to the membrane raft. The protein localises to the lysosome. It is found in the late endosome. The protein resides in the early endosome. Its subcellular location is the recycling endosome. It localises to the cell projection. The protein localises to the axon. It is found in the dendrite. The catalysed reaction is Broad endopeptidase specificity. Cleaves Glu-Val-Asn-Leu-|-Asp-Ala-Glu-Phe in the Swedish variant of Alzheimer's amyloid precursor protein.. With respect to regulation, inhibited by RTN3 and RTN4. In terms of biological role, responsible for the proteolytic processing of the amyloid precursor protein (APP). Cleaves at the N-terminus of the A-beta peptide sequence, between residues 671 and 672 of APP, leads to the generation and extracellular release of beta-cleaved soluble APP, and a corresponding cell-associated C-terminal fragment which is later released by gamma-secretase. Cleaves CHL1. The sequence is that of Beta-secretase 1 (BACE1) from Cavia porcellus (Guinea pig).